The following is a 261-amino-acid chain: MEEELEPLNRPTLDPDESYAEEKIYGSSHREPNSRIRVFVSLLILSNTISFGLLGWIGLSSTQASLAIPEDYAIPPRIATQYKRFWWTTEYSSKNQSQQDELWNSIVWTYGMIGVDHEWSKSQHWPDTMSLPQDKTKAVYLLQAYHEIHCLGVLRRLMSQSLAGVDFSESEHTHAHIAHCFDSLLQSTICRADSTPLYTFGGTIVGSGQQHECRDWNALRDYATQNSACYTEESGFGGQCSDGDGLVPATPMETQQDGFWL.

The helical transmembrane segment at 38–58 (VFVSLLILSNTISFGLLGWIG) threads the bilayer. An N-linked (GlcNAc...) asparagine glycan is attached at Asn95. 2 short sequence motifs (HXXHC) span residues 146-150 (HEIHC) and 176-180 (HIAHC).

This sequence belongs to the ustYa family.

Its subcellular location is the membrane. Its pathway is mycotoxin biosynthesis. In terms of biological role, hydroxylase; part of the gene cluster that mediates the biosynthesis of the mycotoxin cyclochlorotine, a hepatotoxic and carcinogenic cyclic chlorinated pentapeptide. Within the pathway, cctR performs the last step by hydroxylating cyclochlorotine to yield hydroxycyclochlorotine. The NRPS cctN initially catalyzes the condensation of L-serine (Ser), Pro, L-2-aminobutyrate (2Abu), Ser, and beta-Phe in this order to produce isocyclotine. After the dichlorination of Pro2 catalyzed by cctP2 to produce isocyclochlorotine, the cctO-mediated transacylation of isocyclochlorotine can furnish cyclochlorotine. The subsequent hydroxylation of cyclochlorotine by cctR yields hydroxycyclochlorotine as the final product. CctP1 probably acts as a phenylalanine aminomutase and provides the uncommon building block beta-Phe. Furthermore, 2Abu can be synthesized from threonine by one of the threonine dehydratases and transaminases localized outside of the cluster. The functions of the remaining proteins encoded by the cluster, cctM and cctT, have not been identified yet. The sequence is that of Hydroxylase cctR from Talaromyces islandicus (Penicillium islandicum).